The chain runs to 199 residues: Major capsid protein (199 aa).

2 disordered regions span residues 1 to 21 (MNSVGRRNNRRRNGPRRARRV) and 33 to 52 (NRAGPKRRARRRTRGGGANL). 2 stretches are compositionally biased toward basic residues: residues 7–21 (RNNRRRNGPRRARRV) and 36–46 (GPKRRARRRTR).

It belongs to the luteoviruses capsid protein family.

Its subcellular location is the virion. Functionally, major capsid protein. This is Major capsid protein from Avena byzantina (Oat).